The chain runs to 112 residues: UPF0102 protein JJD26997_0163 (112 aa).

The protein belongs to the UPF0102 family.

This chain is UPF0102 protein JJD26997_0163, found in Campylobacter jejuni subsp. doylei (strain ATCC BAA-1458 / RM4099 / 269.97).